Reading from the N-terminus, the 695-residue chain is Polyribonucleotide nucleotidyltransferase (695 aa).

2 residues coordinate Mg(2+): aspartate 486 and aspartate 492. Residues 553–612 (PRIETMQINTSKIATVIGPGGKQIRQIIERSGAQVDINDDGVINIAASTQESINKAKELI) enclose the KH domain. Residues 622-690 (GKVYNGRVTS…EKGQLKLSHK (69 aa)) enclose the S1 motif domain.

The protein belongs to the polyribonucleotide nucleotidyltransferase family. Requires Mg(2+) as cofactor.

The protein resides in the cytoplasm. It carries out the reaction RNA(n+1) + phosphate = RNA(n) + a ribonucleoside 5'-diphosphate. In terms of biological role, involved in mRNA degradation. Catalyzes the phosphorolysis of single-stranded polyribonucleotides processively in the 3'- to 5'-direction. The sequence is that of Polyribonucleotide nucleotidyltransferase from Chlamydia trachomatis serovar A (strain ATCC VR-571B / DSM 19440 / HAR-13).